The sequence spans 164 residues: uncharacterized protein (164 aa).

A disordered region spans residues 107–136; that stretch reads QSESGGSGSNSRSSSDTTEPTDPPAPVRKT.

This is an uncharacterized protein from Escherichia coli (Bacteriophage T4).